The chain runs to 550 residues: Major fimbrium tip subunit FimE (550 aa).

An N-terminal signal peptide occupies residues 1 to 21 (MKSKSIIAQLLYVLIAFMAVS). Cysteine 22 is lipidated: N-palmitoyl cysteine. Cysteine 22 carries the S-diacylglycerol cysteine lipid modification. Residues 22–51 (CVADKSEPCPSGEPTRVSGSIVSLEHHGLR) constitute a propeptide that is removed on maturation.

Belongs to the FimE family. Fimbriae are composed of a major, structural subunit and the minor components FimC, FimD and FimE. Identified in a complex composed of FimC, FimD and FimE (in vitro). Does not directly interact with host proteins, but only as a complex with FimC and FimD.

It localises to the fimbrium. Its subcellular location is the cell outer membrane. Probably a component of the fimbrium tip; required for incorporation of FimC and FimD into fimbriae. These long, filamentous pili are attached to the cell surface; they mediate biofilm formation, adhesion onto host cells and onto other bacteria that are part of the oral microbiome. They play an important role in invasion of periodontal tissues and are major virulence factors. FimC, FimD and FimE contribute to interaction with host CXCR4 and thereby down-regulate the TLR2-mediated host immune response. This chain is Major fimbrium tip subunit FimE, found in Porphyromonas gingivalis (strain ATCC 33277 / DSM 20709 / CIP 103683 / JCM 12257 / NCTC 11834 / 2561).